Reading from the N-terminus, the 304-residue chain is Ornithine carbamoyltransferase (304 aa).

Residues 53 to 56, Q80, R104, and 131 to 134 each bind carbamoyl phosphate; these read STRT and HPCQ. L-ornithine is bound by residues N162, D219, and 223 to 224; that span reads SM. Residues 259 to 260 and R287 each bind carbamoyl phosphate; that span reads CL.

This sequence belongs to the aspartate/ornithine carbamoyltransferase superfamily. OTCase family.

The protein resides in the cytoplasm. The enzyme catalyses carbamoyl phosphate + L-ornithine = L-citrulline + phosphate + H(+). It functions in the pathway amino-acid biosynthesis; L-arginine biosynthesis; L-arginine from L-ornithine and carbamoyl phosphate: step 1/3. Its function is as follows. Reversibly catalyzes the transfer of the carbamoyl group from carbamoyl phosphate (CP) to the N(epsilon) atom of ornithine (ORN) to produce L-citrulline. The chain is Ornithine carbamoyltransferase from Nitrosococcus oceani (strain ATCC 19707 / BCRC 17464 / JCM 30415 / NCIMB 11848 / C-107).